The sequence spans 172 residues: Large ribosomal subunit protein uL22y (172 aa).

This sequence belongs to the universal ribosomal protein uL22 family.

The sequence is that of Large ribosomal subunit protein uL22y from Hordeum vulgare (Barley).